Here is a 360-residue protein sequence, read N- to C-terminus: Putative F-box protein At1g65770 (360 aa).

The region spanning 2 to 50 (ADWSTLPVDLLNMIAGRLFSNIELKRFRSICRSWRSSVPGAGKKNPFRT) is the F-box domain.

The sequence is that of Putative F-box protein At1g65770 from Arabidopsis thaliana (Mouse-ear cress).